The following is a 464-amino-acid chain: L-cystine uptake protein TcyP (464 aa).

10 consecutive transmembrane segments (helical) span residues 3–23, 34–54, 73–93, 107–127, 184–204, 225–245, 263–283, 347–367, 371–391, and 395–415; these read TLLV…LYYM, VFTA…IYEP, YVKL…ISAF, GLII…GIAA, PTST…FIGV, IVMR…LALM, FVLA…LLIA, AGIY…IDPL, FILT…GVGG, and FAAL…ALVI.

The protein belongs to the dicarboxylate/amino acid:cation symporter (DAACS) (TC 2.A.23) family.

It is found in the membrane. Mediates uptake of L-cystine, the oxidized form of L-cysteine. The polypeptide is L-cystine uptake protein TcyP (Bacillus thuringiensis (strain Al Hakam)).